A 238-amino-acid chain; its full sequence is Zinc import ATP-binding protein ZnuC (238 aa).

One can recognise an ABC transporter domain in the interval 5–220 (VKLKNVCVNL…LEFISIFGLK (216 aa)). 37 to 44 (GPNGAGKS) contributes to the ATP binding site.

It belongs to the ABC transporter superfamily. Zinc importer (TC 3.A.1.15.5) family. In terms of assembly, the complex is composed of two ATP-binding proteins (ZnuC), two transmembrane proteins (ZnuB) and a solute-binding protein (ZnuA).

It localises to the cell inner membrane. It catalyses the reaction Zn(2+)(out) + ATP(in) + H2O(in) = Zn(2+)(in) + ADP(in) + phosphate(in) + H(+)(in). Part of the ABC transporter complex ZnuABC involved in zinc import. Responsible for energy coupling to the transport system. The polypeptide is Zinc import ATP-binding protein ZnuC (Buchnera aphidicola subsp. Acyrthosiphon pisum (strain APS) (Acyrthosiphon pisum symbiotic bacterium)).